We begin with the raw amino-acid sequence, 298 residues long: Dihydrodipicolinate reductase-like protein CRR1, chloroplastic (298 aa).

Residues 1–25 constitute a chloroplast transit peptide; it reads MAAVNCHFFQLSRHLKPSRPSFSCS. 160 to 163 serves as a coordination point for NAD(+); it reads APTL.

The protein belongs to the DapB family. In terms of tissue distribution, expressed specifically in leaves.

It is found in the plastid. The protein localises to the chloroplast stroma. In terms of biological role, dihydrodipicolinate reductase (DHPR)-like protein that may not function as DHPR in lysine biosynthesis. Required for both formation and activity of the chloroplast NAD(P)H dehydrogenase (NDH) complex of the photosynthetic electron transport chain. May function in assembly or stabilization of the NDH complex. This chain is Dihydrodipicolinate reductase-like protein CRR1, chloroplastic, found in Arabidopsis thaliana (Mouse-ear cress).